We begin with the raw amino-acid sequence, 368 residues long: Transcription factor bHLH30 (368 aa).

Residues 3-30 (AKKEEEEEEEEDSSEAMNNIQNYQNDLF) are a coiled coil. The bHLH domain maps to 173-222 (AASKSHSEAERRRRERINNHLAKLRSILPNTTKTDKASLLAEVIQHVKEL). A disordered region spans residues 333-368 (KSNVEESSSSGNAKRQRMSSHNTITIVEQQQQYNQR). Polar residues predominate over residues 337–368 (EESSSSGNAKRQRMSSHNTITIVEQQQQYNQR).

In terms of assembly, homodimer. Interacts with LHW.

The protein resides in the nucleus. This Arabidopsis thaliana (Mouse-ear cress) protein is Transcription factor bHLH30 (BHLH30).